A 389-amino-acid chain; its full sequence is Putative RNA methyltransferase R405 (389 aa).

S-adenosyl-L-methionine-binding residues include Gln-207, Asp-261, and Asp-314. Cys-342 acts as the Nucleophile in catalysis.

It belongs to the class I-like SAM-binding methyltransferase superfamily. RNA M5U methyltransferase family.

In Acanthamoeba polyphaga (Amoeba), this protein is Putative RNA methyltransferase R405.